We begin with the raw amino-acid sequence, 495 residues long: MRINPTTSGPAVSTLEEKNLGRIAQIIGPVLDVVFPPGKMPNIYNALVVKGHDTVGQQINVTCEVQQLLGNNRVRAVAMSATDGLTRGMKVIDTGAPLSVPVGGATLGRIFNVLGEPVDNFGPVDTRITSPIHRSAPAFIQLDTKLSIFETGIKVVDLLAPYRRGGKIGLFGGAGVGKTVLIMELINNIAKAHGGVSVFGGVGERTREGNDLYMEMKESGVINEKNIAESKVALVYGQMNEPPGARMRVGLTALTMAEYFRDVNEQDVLLFIDNIFRFVQAGSEVSALLGRMPSAVGYQPTLSTEMGSLQERITSTKEGSITSIQAVYVPADDLTDPAPATTFAHLDATTVLSRGLAAKGIYPAVDPLDSTSTMLQPRIVGEEHYETAQRVKQTLQRYKELQDIIAILGLDELSEEDRLTVARARKIERFLSQPFFVAEVFTGSPGKYVGLPETIRGFQLILSGELDGLPEQAFYLVGNIDEATAKAMNLEGEKK.

172–179 (GGAGVGKT) is an ATP binding site.

The protein belongs to the ATPase alpha/beta chains family. As to quaternary structure, F-type ATPases have 2 components, CF(1) - the catalytic core - and CF(0) - the membrane proton channel. CF(1) has five subunits: alpha(3), beta(3), gamma(1), delta(1), epsilon(1). CF(0) has four main subunits: a(1), b(1), b'(1) and c(9-12).

It localises to the plastid. The protein localises to the chloroplast thylakoid membrane. The enzyme catalyses ATP + H2O + 4 H(+)(in) = ADP + phosphate + 5 H(+)(out). Functionally, produces ATP from ADP in the presence of a proton gradient across the membrane. The catalytic sites are hosted primarily by the beta subunits. This Bowiea volubilis (Climbing onion) protein is ATP synthase subunit beta, chloroplastic.